The sequence spans 499 residues: Catalase (499 aa).

A disordered region spans residues 1 to 25; sequence MTDRPIMTTSAGAPIPDNQNSLTAG. Polar residues predominate over residues 7–23; the sequence is MTTSAGAPIPDNQNSLT. Residues His55 and Asn127 contribute to the active site. Tyr337 lines the heme pocket.

This sequence belongs to the catalase family. As to quaternary structure, homotetramer. Heme serves as cofactor.

It is found in the periplasm. It carries out the reaction 2 H2O2 = O2 + 2 H2O. Its function is as follows. Decomposes hydrogen peroxide into water and oxygen; serves to protect cells from the toxic effects of hydrogen peroxide. The polypeptide is Catalase (katA) (Brucella abortus biovar 1 (strain 9-941)).